A 275-amino-acid polypeptide reads, in one-letter code: NAD kinase (275 aa).

D53 functions as the Proton acceptor in the catalytic mechanism. Residues 53–54 (DG), 129–130 (NE), R155, D157, and 168–173 (TAYNKS) contribute to the NAD(+) site.

The protein belongs to the NAD kinase family. Requires a divalent metal cation as cofactor.

The protein localises to the cytoplasm. The enzyme catalyses NAD(+) + ATP = ADP + NADP(+) + H(+). Its function is as follows. Involved in the regulation of the intracellular balance of NAD and NADP, and is a key enzyme in the biosynthesis of NADP. Catalyzes specifically the phosphorylation on 2'-hydroxyl of the adenosine moiety of NAD to yield NADP. The sequence is that of NAD kinase from Streptococcus agalactiae serotype Ia (strain ATCC 27591 / A909 / CDC SS700).